A 77-amino-acid chain; its full sequence is Large ribosomal subunit protein bL31 (77 aa).

Zn(2+) contacts are provided by cysteine 16, cysteine 18, cysteine 37, and cysteine 40.

It belongs to the bacterial ribosomal protein bL31 family. Type A subfamily. As to quaternary structure, part of the 50S ribosomal subunit. Zn(2+) serves as cofactor.

Binds the 23S rRNA. The protein is Large ribosomal subunit protein bL31 of Pseudomonas fluorescens (strain SBW25).